Consider the following 617-residue polypeptide: MGPVDTSQRLARLRELMQERKVDVYIVPSEDSHQSEYIAPCDGRREFISGFTGSAGCAIVSMSKAALSTDGRYFNQAAKQLDNNWMLLKRGFENMPTWQEWTAEQAEGGKVVGVDPSLITASEARSLSETIEKSGGSLQGVQENLIDLVWGKKRPARPSEKVALHPIEFAGKSFEEKISDLRKELQKKKSAGFVISMLDEIAWLFNLRGNDIPYNPVFFAYAIITPTTADLYIDDEKLPAEVKKYLGDQVSVKPYGSIFEDAKALSQSAQKKSDGDASTSPSEKFLISTKASWSLSLALGGEKNVEEVRSPITDAKAIKNEAELEGMRACHIRDGAALTEYFAWLENELVNKKTVLNEVDGSDKLEQIRSKHKHFVGLSFDTISSTGPNAAVIHYKAERDTCSIIDPKAVYLCDSGAQYLDGTTDTTRTLHFGEPTEMERKAYTLVLKGLISIDTAVFPKGTTGFALDAFARQHLWKEGLDYLHGTGHGVGSYLNVHEGPIGLGTRVQYAEVAITPGNVISDEPGFYEDGVFGIRIENIIIAKEVKTTHGFGEKPWLGFEHVTMTPLCQKLINPSLLTDGEKKWVNDYHSKVWEKTSSYFENDELTRNWLKRETQPI.

Residues Asp-414, Asp-425, Glu-523, and Glu-537 each contribute to the Mn(2+) site.

The protein belongs to the peptidase M24B family. Mn(2+) is required as a cofactor.

It carries out the reaction Release of any N-terminal amino acid, including proline, that is linked to proline, even from a dipeptide or tripeptide.. Catalyzes the removal of a penultimate prolyl residue from the N-termini of peptides. In Blastomyces gilchristii (strain SLH14081) (Blastomyces dermatitidis), this protein is Probable Xaa-Pro aminopeptidase P (AMPP).